Here is a 648-residue protein sequence, read N- to C-terminus: Probable potassium transport system protein Kup 1 (648 aa).

Residues 1–31 are disordered; that stretch reads MSDAVTDADGSSAQSHAQSAGHHAVQGHGGH. Positions 10–26 are enriched in low complexity; the sequence is GSSAQSHAQSAGHHAVQ. Helical transmembrane passes span 39–59, 73–93, 130–150, 165–185, 193–213, 243–263, 275–295, 317–337, 364–384, 394–414, 421–441, and 446–466; these read LAVG…LYAL, LLHI…IVTF, IILL…ITPA, PDMH…LFFI, VAAF…VLGA, FLAM…YADM, WLVF…SLLI, LLFI…SGAF, IFIP…VLVF, YGIA…VVLF, APAA…YLGA, and IPDG…LLTT.

Belongs to the HAK/KUP transporter (TC 2.A.72) family.

The protein localises to the cell inner membrane. It carries out the reaction K(+)(in) + H(+)(in) = K(+)(out) + H(+)(out). In terms of biological role, transport of potassium into the cell. Likely operates as a K(+):H(+) symporter. The protein is Probable potassium transport system protein Kup 1 of Novosphingobium aromaticivorans (strain ATCC 700278 / DSM 12444 / CCUG 56034 / CIP 105152 / NBRC 16084 / F199).